We begin with the raw amino-acid sequence, 84 residues long: Large ribosomal subunit protein bL27 (84 aa).

The segment at 1 to 29 (MAHKKGGGSTKNGRDSNPKYLGIKASGGS) is disordered.

It belongs to the bacterial ribosomal protein bL27 family.

The protein is Large ribosomal subunit protein bL27 of Chlorobium phaeobacteroides (strain BS1).